The following is a 311-amino-acid chain: DNA-directed RNA polymerase subunit alpha (311 aa).

An alpha N-terminal domain (alpha-NTD) region spans residues 1–227 (MNNISIKCLK…DLFTLLINNK (227 aa)). Residues 242-311 (ISIEPYTNIA…LKNKLGIILK (70 aa)) are alpha C-terminal domain (alpha-CTD).

It belongs to the RNA polymerase alpha chain family. In plastids the minimal PEP RNA polymerase catalytic core is composed of four subunits: alpha, beta, beta', and beta''. When a (nuclear-encoded) sigma factor is associated with the core the holoenzyme is formed, which can initiate transcription.

It localises to the plastid. It is found in the chloroplast. The enzyme catalyses RNA(n) + a ribonucleoside 5'-triphosphate = RNA(n+1) + diphosphate. DNA-dependent RNA polymerase catalyzes the transcription of DNA into RNA using the four ribonucleoside triphosphates as substrates. The protein is DNA-directed RNA polymerase subunit alpha of Phaeodactylum tricornutum (strain CCAP 1055/1).